The sequence spans 336 residues: Homoserine O-acetyltransferase (336 aa).

Residues 58–321 (AILVLHALTG…PHGHDAFLID (264 aa)) form the AB hydrolase-1 domain. Ser-147 functions as the Nucleophile in the catalytic mechanism. Residue Arg-204 participates in substrate binding. Catalysis depends on residues Asp-286 and His-315. Residue Asp-316 coordinates substrate.

The protein belongs to the AB hydrolase superfamily. MetX family. As to quaternary structure, homodimer.

The protein localises to the cytoplasm. The catalysed reaction is L-homoserine + acetyl-CoA = O-acetyl-L-homoserine + CoA. The protein operates within amino-acid biosynthesis; L-methionine biosynthesis via de novo pathway; O-acetyl-L-homoserine from L-homoserine: step 1/1. In terms of biological role, transfers an acetyl group from acetyl-CoA to L-homoserine, forming acetyl-L-homoserine. This is Homoserine O-acetyltransferase from Deinococcus geothermalis (strain DSM 11300 / CIP 105573 / AG-3a).